A 176-amino-acid chain; its full sequence is Large ribosomal subunit protein uL10 (176 aa).

The protein belongs to the universal ribosomal protein uL10 family. Part of the ribosomal stalk of the 50S ribosomal subunit. The N-terminus interacts with L11 and the large rRNA to form the base of the stalk. The C-terminus forms an elongated spine to which L12 dimers bind in a sequential fashion forming a multimeric L10(L12)X complex.

Functionally, forms part of the ribosomal stalk, playing a central role in the interaction of the ribosome with GTP-bound translation factors. This is Large ribosomal subunit protein uL10 from Nocardia farcinica (strain IFM 10152).